The primary structure comprises 418 residues: EPS I polysaccharide export inner membrane protein EpsF (418 aa).

The next 10 helical transmembrane spans lie at 21–41 (VLVVIGMLLVVPMAFPLLPII), 45–65 (CAAIFVILLPLGRLQHVLATA), 142–162 (PLLVWAVLIFISLMLAWIAIY), 170–190 (YVVFVSYLSTITLYALQGSAI), 222–242 (AGTHSSAAVVLLACAVVVLFL), 262–282 (LIVLLALAAAGAVFGSAEFVM), 296–316 (SAWELQLAVEAVLACLFAWLL), 326–346 (MAFLLFVVVCFSTSLFAPAVG), 347–367 (ARLFRYTYCFYIVYLCAFFFA), and 377–397 (KTLASLLLLASFGWAIFIVSA).

It to S.marcescens SfuB.

Its subcellular location is the cell inner membrane. In terms of biological role, probably involved in polymerization and/or export of exopolysaccharide EPS I which functions as a virulence factor. May play a role in export of EPS I or its intermediates across the membranes. This is EPS I polysaccharide export inner membrane protein EpsF (epsF) from Ralstonia nicotianae (strain ATCC BAA-1114 / GMI1000) (Ralstonia solanacearum).